Reading from the N-terminus, the 539-residue chain is Glutamyl-tRNA(Gln) amidotransferase subunit B, mitochondrial (539 aa).

It belongs to the GatB/GatE family. GatB subfamily. As to quaternary structure, subunit of the heterotrimeric GatFAB amidotransferase (AdT) complex, composed of A, B and F subunits.

The protein resides in the mitochondrion. It catalyses the reaction L-glutamyl-tRNA(Gln) + L-glutamine + ATP + H2O = L-glutaminyl-tRNA(Gln) + L-glutamate + ADP + phosphate + H(+). Its function is as follows. Allows the formation of correctly charged Gln-tRNA(Gln) through the transamidation of misacylated Glu-tRNA(Gln) in the mitochondria. The reaction takes place in the presence of glutamine and ATP through an activated gamma-phospho-Glu-tRNA(Gln). This Kluyveromyces lactis (strain ATCC 8585 / CBS 2359 / DSM 70799 / NBRC 1267 / NRRL Y-1140 / WM37) (Yeast) protein is Glutamyl-tRNA(Gln) amidotransferase subunit B, mitochondrial.